A 222-amino-acid chain; its full sequence is Protein GrpE (222 aa).

Positions 1 to 21 are disordered; sequence MSDEKNKFTDASFENCDLKNP.

Belongs to the GrpE family. In terms of assembly, homodimer.

The protein localises to the cytoplasm. In terms of biological role, participates actively in the response to hyperosmotic and heat shock by preventing the aggregation of stress-denatured proteins, in association with DnaK and GrpE. It is the nucleotide exchange factor for DnaK and may function as a thermosensor. Unfolded proteins bind initially to DnaJ; upon interaction with the DnaJ-bound protein, DnaK hydrolyzes its bound ATP, resulting in the formation of a stable complex. GrpE releases ADP from DnaK; ATP binding to DnaK triggers the release of the substrate protein, thus completing the reaction cycle. Several rounds of ATP-dependent interactions between DnaJ, DnaK and GrpE are required for fully efficient folding. The protein is Protein GrpE of Bartonella tribocorum (strain CIP 105476 / IBS 506).